An 83-amino-acid polypeptide reads, in one-letter code: Cytochrome b559 subunit alpha (83 aa).

The helical transmembrane segment at 21 to 35 (VIHSITIPSLFIAGW) threads the bilayer. His23 serves as a coordination point for heme.

It belongs to the PsbE/PsbF family. As to quaternary structure, heterodimer of an alpha subunit and a beta subunit. PSII is composed of 1 copy each of membrane proteins PsbA, PsbB, PsbC, PsbD, PsbE, PsbF, PsbH, PsbI, PsbJ, PsbK, PsbL, PsbM, PsbT, PsbX, PsbY, PsbZ, Psb30/Ycf12, at least 3 peripheral proteins of the oxygen-evolving complex and a large number of cofactors. It forms dimeric complexes. The cofactor is heme b.

It is found in the plastid. It localises to the chloroplast thylakoid membrane. This b-type cytochrome is tightly associated with the reaction center of photosystem II (PSII). PSII is a light-driven water:plastoquinone oxidoreductase that uses light energy to abstract electrons from H(2)O, generating O(2) and a proton gradient subsequently used for ATP formation. It consists of a core antenna complex that captures photons, and an electron transfer chain that converts photonic excitation into a charge separation. The polypeptide is Cytochrome b559 subunit alpha (Zygnema circumcarinatum (Green alga)).